The primary structure comprises 1033 residues: Error-prone DNA polymerase (1033 aa).

This sequence belongs to the DNA polymerase type-C family. DnaE2 subfamily.

The protein localises to the cytoplasm. It carries out the reaction DNA(n) + a 2'-deoxyribonucleoside 5'-triphosphate = DNA(n+1) + diphosphate. In terms of biological role, DNA polymerase involved in damage-induced mutagenesis and translesion synthesis (TLS). It is not the major replicative DNA polymerase. The chain is Error-prone DNA polymerase from Teredinibacter turnerae (strain ATCC 39867 / T7901).